A 274-amino-acid chain; its full sequence is Diaminopimelate epimerase (274 aa).

Substrate-binding residues include asparagine 11 and asparagine 60. Catalysis depends on cysteine 69, which acts as the Proton donor. Residues glycine 70–asparagine 71, asparagine 191, and glutamate 209–arginine 210 each bind substrate. Catalysis depends on cysteine 218, which acts as the Proton acceptor. Glycine 219–serine 220 is a substrate binding site.

It belongs to the diaminopimelate epimerase family. As to quaternary structure, homodimer.

Its subcellular location is the cytoplasm. The catalysed reaction is (2S,6S)-2,6-diaminopimelate = meso-2,6-diaminopimelate. It functions in the pathway amino-acid biosynthesis; L-lysine biosynthesis via DAP pathway; DL-2,6-diaminopimelate from LL-2,6-diaminopimelate: step 1/1. In terms of biological role, catalyzes the stereoinversion of LL-2,6-diaminopimelate (L,L-DAP) to meso-diaminopimelate (meso-DAP), a precursor of L-lysine and an essential component of the bacterial peptidoglycan. This Caldanaerobacter subterraneus subsp. tengcongensis (strain DSM 15242 / JCM 11007 / NBRC 100824 / MB4) (Thermoanaerobacter tengcongensis) protein is Diaminopimelate epimerase.